The primary structure comprises 209 residues: Ribonuclease HII (209 aa).

The RNase H type-2 domain maps to 5–202 (SMTLGIDEAG…KNRILNPKLL (198 aa)). A divalent metal cation is bound by residues aspartate 11, glutamate 12, and aspartate 108.

This sequence belongs to the RNase HII family. It depends on Mn(2+) as a cofactor. The cofactor is Mg(2+).

It is found in the cytoplasm. The enzyme catalyses Endonucleolytic cleavage to 5'-phosphomonoester.. In terms of biological role, endonuclease that specifically degrades the RNA of RNA-DNA hybrids. The protein is Ribonuclease HII (rnhB) of Helicobacter pylori (strain J99 / ATCC 700824) (Campylobacter pylori J99).